Here is a 379-residue protein sequence, read N- to C-terminus: Homoserine O-succinyltransferase (379 aa).

The region spanning 51 to 360 is the AB hydrolase-1 domain; that stretch reads NAVLICHALS…DAPQGHDAFL (310 aa). Ser157 (nucleophile) is an active-site residue. Arg227 lines the substrate pocket. Catalysis depends on residues Asp323 and His356. Asp357 contributes to the substrate binding site.

Belongs to the AB hydrolase superfamily. MetX family. In terms of assembly, homodimer.

It localises to the cytoplasm. The catalysed reaction is L-homoserine + succinyl-CoA = O-succinyl-L-homoserine + CoA. Its pathway is amino-acid biosynthesis; L-methionine biosynthesis via de novo pathway; O-succinyl-L-homoserine from L-homoserine: step 1/1. In terms of biological role, transfers a succinyl group from succinyl-CoA to L-homoserine, forming succinyl-L-homoserine. The protein is Homoserine O-succinyltransferase of Pseudomonas fluorescens (strain SBW25).